Reading from the N-terminus, the 224-residue chain is Viral late gene transcription factor 3 (224 aa).

The protein belongs to the orthopoxvirus VLTF-3/OPG127 family. As to quaternary structure, interacts with the late transcription elongation factor VLTF-4/OPG110. Interacts with the late transcription factors VLTF-1/OPG093.

Acts with RNA polymerase to initiate transcription from late gene promoters. The sequence is that of Viral late gene transcription factor 3 (OPG127) from Monkeypox virus.